Here is a 402-residue protein sequence, read N- to C-terminus: Argininosuccinate synthase (402 aa).

Residues Ala10–Ser18 and Ala38 contribute to the ATP site. Tyr89 lines the L-citrulline pocket. Gly119 serves as a coordination point for ATP. Residues Thr121, Asn125, and Asp126 each contribute to the L-aspartate site. Asn125 serves as a coordination point for L-citrulline. L-citrulline contacts are provided by Arg129, Ser177, Ser186, Glu262, and Tyr274.

The protein belongs to the argininosuccinate synthase family. Type 1 subfamily. As to quaternary structure, homotetramer.

The protein resides in the cytoplasm. It catalyses the reaction L-citrulline + L-aspartate + ATP = 2-(N(omega)-L-arginino)succinate + AMP + diphosphate + H(+). It participates in amino-acid biosynthesis; L-arginine biosynthesis; L-arginine from L-ornithine and carbamoyl phosphate: step 2/3. This is Argininosuccinate synthase from Prochlorococcus marinus (strain SARG / CCMP1375 / SS120).